The chain runs to 266 residues: Phosphatidate cytidylyltransferase (266 aa).

The next 8 membrane-spanning stretches (helical) occupy residues 16–36 (FVLI…LFWA), 52–72 (LFQV…WVAA), 78–98 (PIEC…YQKA), 101–121 (SEAI…FGVY), 125–145 (GAVA…GAFF), 164–184 (LEGA…VGMG), 186–206 (LSGG…VAVF), and 237–257 (LDSM…LEIW).

Belongs to the CDS family.

Its subcellular location is the cell inner membrane. It catalyses the reaction a 1,2-diacyl-sn-glycero-3-phosphate + CTP + H(+) = a CDP-1,2-diacyl-sn-glycerol + diphosphate. It participates in phospholipid metabolism; CDP-diacylglycerol biosynthesis; CDP-diacylglycerol from sn-glycerol 3-phosphate: step 3/3. The sequence is that of Phosphatidate cytidylyltransferase (cdsA) from Helicobacter pylori (strain ATCC 700392 / 26695) (Campylobacter pylori).